The sequence spans 232 residues: Phosphoribosylformylglycinamidine synthase subunit PurQ (232 aa).

Residues 2–232 form the Glutamine amidotransferase type-1 domain; the sequence is KIAIIQFGGT…SMADYITENF (231 aa). Catalysis depends on C86, which acts as the Nucleophile. Active-site residues include H203 and E205.

Part of the FGAM synthase complex composed of 1 PurL, 1 PurQ and 2 PurS subunits.

It localises to the cytoplasm. It carries out the reaction N(2)-formyl-N(1)-(5-phospho-beta-D-ribosyl)glycinamide + L-glutamine + ATP + H2O = 2-formamido-N(1)-(5-O-phospho-beta-D-ribosyl)acetamidine + L-glutamate + ADP + phosphate + H(+). It catalyses the reaction L-glutamine + H2O = L-glutamate + NH4(+). It participates in purine metabolism; IMP biosynthesis via de novo pathway; 5-amino-1-(5-phospho-D-ribosyl)imidazole from N(2)-formyl-N(1)-(5-phospho-D-ribosyl)glycinamide: step 1/2. Functionally, part of the phosphoribosylformylglycinamidine synthase complex involved in the purines biosynthetic pathway. Catalyzes the ATP-dependent conversion of formylglycinamide ribonucleotide (FGAR) and glutamine to yield formylglycinamidine ribonucleotide (FGAM) and glutamate. The FGAM synthase complex is composed of three subunits. PurQ produces an ammonia molecule by converting glutamine to glutamate. PurL transfers the ammonia molecule to FGAR to form FGAM in an ATP-dependent manner. PurS interacts with PurQ and PurL and is thought to assist in the transfer of the ammonia molecule from PurQ to PurL. This Methanosarcina acetivorans (strain ATCC 35395 / DSM 2834 / JCM 12185 / C2A) protein is Phosphoribosylformylglycinamidine synthase subunit PurQ.